The following is a 51-amino-acid chain: Large ribosomal subunit protein eL39 (51 aa).

The protein belongs to the eukaryotic ribosomal protein eL39 family.

The sequence is that of Large ribosomal subunit protein eL39 from Thermococcus gammatolerans (strain DSM 15229 / JCM 11827 / EJ3).